We begin with the raw amino-acid sequence, 283 residues long: Polyamine aminopropyltransferase (283 aa).

The PABS domain maps to Asn5 to Lys241. Position 35 (Gln35) interacts with S-methyl-5'-thioadenosine. Residues His66 and Asp90 each coordinate spermidine. S-methyl-5'-thioadenosine contacts are provided by residues Asp110 and Asp141–Gly142. Asp160 serves as the catalytic Proton acceptor. Spermidine is bound at residue Asp160–Asp163. Position 167 (Pro167) interacts with S-methyl-5'-thioadenosine.

It belongs to the spermidine/spermine synthase family. Homodimer or homotetramer.

The protein resides in the cytoplasm. It catalyses the reaction S-adenosyl 3-(methylsulfanyl)propylamine + putrescine = S-methyl-5'-thioadenosine + spermidine + H(+). It participates in amine and polyamine biosynthesis; spermidine biosynthesis; spermidine from putrescine: step 1/1. Its function is as follows. Catalyzes the irreversible transfer of a propylamine group from the amino donor S-adenosylmethioninamine (decarboxy-AdoMet) to putrescine (1,4-diaminobutane) to yield spermidine. This is Polyamine aminopropyltransferase from Stenotrophomonas maltophilia (strain R551-3).